The chain runs to 743 residues: Catalase-peroxidase (743 aa).

Residues 1 to 29 form a disordered region; it reads MNAESGENAGGGCPLGHGAGAPRKRPSNR. Positions 8–19 are enriched in gly residues; sequence NAGGGCPLGHGA. Residues 100 to 222 constitute a cross-link (tryptophyl-tyrosyl-methioninium (Trp-Tyr) (with M-248)); sequence WHSAGTYRIT…LGAVQMGLIY (123 aa). H101 functions as the Proton acceptor in the catalytic mechanism. Residues 222-248 constitute a cross-link (tryptophyl-tyrosyl-methioninium (Tyr-Met) (with W-100)); the sequence is YVNPEGPNGNPDPKAAAVDIRETFARM. H263 lines the heme b pocket.

The protein belongs to the peroxidase family. Peroxidase/catalase subfamily. In terms of assembly, homodimer or homotetramer. Heme b serves as cofactor. Post-translationally, formation of the three residue Trp-Tyr-Met cross-link is important for the catalase, but not the peroxidase activity of the enzyme.

The catalysed reaction is H2O2 + AH2 = A + 2 H2O. The enzyme catalyses 2 H2O2 = O2 + 2 H2O. In terms of biological role, bifunctional enzyme with both catalase and broad-spectrum peroxidase activity. In Stutzerimonas stutzeri (strain A1501) (Pseudomonas stutzeri), this protein is Catalase-peroxidase.